A 177-amino-acid chain; its full sequence is Large ribosomal subunit protein uL10 (177 aa).

It belongs to the universal ribosomal protein uL10 family. As to quaternary structure, part of the ribosomal stalk of the 50S ribosomal subunit. The N-terminus interacts with L11 and the large rRNA to form the base of the stalk. The C-terminus forms an elongated spine to which L12 dimers bind in a sequential fashion forming a multimeric L10(L12)X complex.

Its function is as follows. Forms part of the ribosomal stalk, playing a central role in the interaction of the ribosome with GTP-bound translation factors. This chain is Large ribosomal subunit protein uL10, found in Leptospira interrogans serogroup Icterohaemorrhagiae serovar copenhageni (strain Fiocruz L1-130).